The following is a 207-amino-acid chain: uncharacterized protein (207 aa).

Positions 1–19 (MRFNVSFLLSLLLPTLAFA) are cleaved as a signal peptide.

It to P.multocida PM1509.

This is an uncharacterized protein from Pasteurella multocida (strain Pm70).